The primary structure comprises 873 residues: Protein SEY1 (873 aa).

The segment at Met-1 to His-21 is disordered. Residues Met-1–Gln-749 lie on the Cytoplasmic side of the membrane. The GB1/RHD3-type G domain occupies Gly-49–Ala-307. Gly-59 to Ser-66 provides a ligand contact to GTP. Positions Ser-482–Glu-506 form a coiled coil. The tract at residues Leu-676–Asp-703 is disordered. Acidic residues predominate over residues Ala-690–Asp-703. A helical transmembrane segment spans residues Val-750–Leu-770. The Lumenal portion of the chain corresponds to Arg-771–Pro-773. A helical transmembrane segment spans residues Val-774–Leu-794. The Cytoplasmic portion of the chain corresponds to Trp-795–Phe-873. The interval Arg-828–Phe-873 is disordered. The segment covering Ala-839–Asp-863 has biased composition (basic and acidic residues). Over residues Glu-864–Phe-873 the composition is skewed to acidic residues.

Belongs to the TRAFAC class dynamin-like GTPase superfamily. GB1/RHD3 GTPase family. RHD3 subfamily.

The protein resides in the endoplasmic reticulum membrane. Cooperates with the reticulon proteins and tubule-shaping DP1 family proteins to generate and maintain the structure of the tubular endoplasmic reticulum network. Has GTPase activity, which is required for its function in ER organization. The chain is Protein SEY1 from Ajellomyces capsulatus (strain G186AR / H82 / ATCC MYA-2454 / RMSCC 2432) (Darling's disease fungus).